A 160-amino-acid chain; its full sequence is UPF0225 protein PP_1119 (160 aa).

It belongs to the UPF0225 family.

In Pseudomonas putida (strain ATCC 47054 / DSM 6125 / CFBP 8728 / NCIMB 11950 / KT2440), this protein is UPF0225 protein PP_1119.